The sequence spans 676 residues: Methionine--tRNA ligase (676 aa).

The 'HIGH' region signature appears at 15–25; the sequence is PYANGSIHLGH. Residues Cys-146, Cys-149, Cys-159, and Cys-162 each coordinate Zn(2+). Residues 332-336 carry the 'KMSKS' region motif; the sequence is KMSKS. Lys-335 is a binding site for ATP. Positions 574–676 constitute a tRNA-binding domain; the sequence is DFAKVDMRIA…SGAQPGQQVK (103 aa).

It belongs to the class-I aminoacyl-tRNA synthetase family. MetG type 1 subfamily. In terms of assembly, homodimer. Zn(2+) is required as a cofactor.

It localises to the cytoplasm. The enzyme catalyses tRNA(Met) + L-methionine + ATP = L-methionyl-tRNA(Met) + AMP + diphosphate. Is required not only for elongation of protein synthesis but also for the initiation of all mRNA translation through initiator tRNA(fMet) aminoacylation. The polypeptide is Methionine--tRNA ligase (Erwinia tasmaniensis (strain DSM 17950 / CFBP 7177 / CIP 109463 / NCPPB 4357 / Et1/99)).